We begin with the raw amino-acid sequence, 489 residues long: Glutamyl-tRNA(Gln) amidotransferase subunit A (489 aa).

Residues K78 and S153 each act as charge relay system in the active site. The Acyl-ester intermediate role is filled by S177.

The protein belongs to the amidase family. GatA subfamily. Heterotrimer of A, B and C subunits.

The enzyme catalyses L-glutamyl-tRNA(Gln) + L-glutamine + ATP + H2O = L-glutaminyl-tRNA(Gln) + L-glutamate + ADP + phosphate + H(+). Functionally, allows the formation of correctly charged Gln-tRNA(Gln) through the transamidation of misacylated Glu-tRNA(Gln) in organisms which lack glutaminyl-tRNA synthetase. The reaction takes place in the presence of glutamine and ATP through an activated gamma-phospho-Glu-tRNA(Gln). This is Glutamyl-tRNA(Gln) amidotransferase subunit A from Enterococcus faecalis (strain ATCC 700802 / V583).